The primary structure comprises 432 residues: Glutamyl-tRNA reductase (432 aa).

Substrate-binding positions include 55–58, S114, 119–121, and Q125; these read TCNR and ETQ. C56 acts as the Nucleophile in catalysis. 194–199 contacts NADP(+); it reads GAGEMI.

Belongs to the glutamyl-tRNA reductase family. Homodimer.

The catalysed reaction is (S)-4-amino-5-oxopentanoate + tRNA(Glu) + NADP(+) = L-glutamyl-tRNA(Glu) + NADPH + H(+). It participates in porphyrin-containing compound metabolism; protoporphyrin-IX biosynthesis; 5-aminolevulinate from L-glutamyl-tRNA(Glu): step 1/2. Functionally, catalyzes the NADPH-dependent reduction of glutamyl-tRNA(Glu) to glutamate 1-semialdehyde (GSA). The sequence is that of Glutamyl-tRNA reductase from Burkholderia cenocepacia (strain ATCC BAA-245 / DSM 16553 / LMG 16656 / NCTC 13227 / J2315 / CF5610) (Burkholderia cepacia (strain J2315)).